The following is a 333-amino-acid chain: Delta(9)-fatty-acid desaturase fat-5 (333 aa).

The next 4 helical transmembrane spans lie at 42-62 (NVAL…QLVF), 66-86 (WATV…VTGG), 187-207 (LPLV…VLWG), and 210-230 (AFIA…HATW).

It belongs to the fatty acid desaturase type 1 family. Expressed in the intestine in adult worms and in all four larval stages. Additional expression in the pharynx and tail cells after hatching and throughout the lifespan.

Its subcellular location is the membrane. It carries out the reaction hexadecanoyl-CoA + 2 Fe(II)-[cytochrome b5] + O2 + 2 H(+) = (9Z)-hexadecenoyl-CoA + 2 Fe(III)-[cytochrome b5] + 2 H2O. It catalyses the reaction tetradecanoyl-CoA + 2 Fe(II)-[cytochrome b5] + O2 + 2 H(+) = (9Z)-tetradecenoyl-CoA + 2 Fe(III)-[cytochrome b5] + 2 H2O. The enzyme catalyses heptadecanoyl-CoA + 2 Fe(II)-[cytochrome b5] + O2 + 2 H(+) = (9Z)-heptadecenoyl-CoA + 2 Fe(III)-[cytochrome b5] + 2 H2O. The catalysed reaction is pentadecanoyl-CoA + 2 Fe(II)-[cytochrome b5] + O2 + 2 H(+) = (9Z)-pentadecenoyl-CoA + 2 Fe(III)-[cytochrome b5] + 2 H2O. It participates in lipid metabolism; monounsaturated fatty acid biosynthesis. Functionally, delta(9)-fatty acid desaturase that acts preferentially on palmitoyl-CoA (hexadecanoyl-CoA) producing the monounsaturated palmitoleoyl-CoA ((9Z)-hexadecenoyl-CoA), which can be elongated to (11Z)-octadecenoyl-CoA (the most abundant monounsaturated fatty acid in Caenorhabditis elegans phospholipids and triacylglycerols). Also acts on pentadecanoyl-CoA, heptadecanoyl-CoA and myristoyl-CoA (tetradecanoyl-CoA), the monounsaturated fatty acids (MUFAs) produced are further used as substrates to synthesize polyunsaturated fatty acids (PUFAs) by several other desaturases and elongases. Unlike plants, Caenorhabditis elegans desaturases seem to use fatty acyl-CoAs as substrates. This chain is Delta(9)-fatty-acid desaturase fat-5 (fat-5), found in Caenorhabditis elegans.